The chain runs to 90 residues: MALVRSLLGAKKILSRSTAAVSAAPKGFLAVYVGESQKKRYLVPLSYLNQPSFQALLSKSEDEFGFDHPMGGLTIPCHEDTFINVTSRLQ.

It belongs to the ARG7 family.

It is found in the cell membrane. Its function is as follows. Functions as a positive effector of cell expansion through modulation of auxin transport. This Arabidopsis thaliana (Mouse-ear cress) protein is Auxin-responsive protein SAUR22.